The primary structure comprises 1412 residues: DNA-directed RNA polymerase subunit beta' (1412 aa).

Zn(2+) contacts are provided by Cys-70, Cys-72, Cys-85, and Cys-88. Mg(2+) contacts are provided by Asp-460, Asp-462, and Asp-464. Residues Cys-819, Cys-893, Cys-900, and Cys-903 each coordinate Zn(2+). The segment at 1393–1412 (EAFEFGTPSAPAEEPQHPAE) is disordered.

The protein belongs to the RNA polymerase beta' chain family. The RNAP catalytic core consists of 2 alpha, 1 beta, 1 beta' and 1 omega subunit. When a sigma factor is associated with the core the holoenzyme is formed, which can initiate transcription. It depends on Mg(2+) as a cofactor. Requires Zn(2+) as cofactor.

It carries out the reaction RNA(n) + a ribonucleoside 5'-triphosphate = RNA(n+1) + diphosphate. In terms of biological role, DNA-dependent RNA polymerase catalyzes the transcription of DNA into RNA using the four ribonucleoside triphosphates as substrates. This is DNA-directed RNA polymerase subunit beta' from Burkholderia mallei (strain NCTC 10229).